We begin with the raw amino-acid sequence, 192 residues long: Orotate phosphoribosyltransferase (192 aa).

Position 116–124 (116–124 (EDIVTTGLS)) interacts with 5-phospho-alpha-D-ribose 1-diphosphate. The orotate site is built by Thr120 and Arg148.

Belongs to the purine/pyrimidine phosphoribosyltransferase family. PyrE subfamily. Homodimer. It depends on Mg(2+) as a cofactor.

It carries out the reaction orotidine 5'-phosphate + diphosphate = orotate + 5-phospho-alpha-D-ribose 1-diphosphate. Its pathway is pyrimidine metabolism; UMP biosynthesis via de novo pathway; UMP from orotate: step 1/2. Catalyzes the transfer of a ribosyl phosphate group from 5-phosphoribose 1-diphosphate to orotate, leading to the formation of orotidine monophosphate (OMP). The polypeptide is Orotate phosphoribosyltransferase (Bartonella bacilliformis (strain ATCC 35685 / KC583 / Herrer 020/F12,63)).